The following is a 1958-amino-acid chain: Rho GTPase-activating protein 21 (1958 aa).

Residues 1–42 (MMATRRTGLSEGDGDKLKACEVSKNKDGKEQSETVSLSEDET) form a disordered region. The segment covering 13–32 (DGDKLKACEVSKNKDGKEQS) has biased composition (basic and acidic residues). A phosphoserine mark is found at Ser36 and Ser57. Positions 50–159 (TVTLKRTSQG…TLELSVMPKD (110 aa)) constitute a PDZ domain. Composition is skewed to polar residues over residues 286-295 (SNRNNHTGPS), 306-325 (SEQTSLKTVSRTTSPPLSIP), and 418-436 (ASQSTTDYNQVVPNRTTLQ). 2 disordered regions span residues 286 to 325 (SNRNNHTGPSHRTEEVRYGVSEQTSLKTVSRTTSPPLSIP) and 418 to 458 (ASQS…QRSV). Residues 448–458 (PQSVQIRQRSV) are compositionally biased toward low complexity. At Ser459 the chain carries Phosphoserine. Residues Arg554 and Arg575 each carry the omega-N-methylarginine modification. Ser612, Ser616, and Ser625 each carry phosphoserine. Over residues 659-687 (SLLNQQTWVRTDSAPDQQVETGKSPSLSG) the composition is skewed to polar residues. The segment at 659–751 (SLLNQQTWVR…PSGRQTPQPL (93 aa)) is disordered. Ser717 is subject to Phosphoserine. The span at 729-742 (LDNKEAVILREKPP) shows a compositional bias: basic and acidic residues. The residue at position 747 (Thr747) is a Phosphothreonine. 3 positions are modified to phosphoserine: Ser857, Ser862, and Ser881. The segment at 859–885 (DHESVGPPSLDAQPNSKTERSKSYDEG) is disordered. The span at 875–885 (KTERSKSYDEG) shows a compositional bias: basic and acidic residues. Tyr882 is subject to Phosphotyrosine. Phosphoserine occurs at positions 924, 926, 954, 1099, and 1115. The segment at 930-1097 (SDAAKEGWLH…AKSEPKTQSP (168 aa)) is interaction with ARF1 and ARF6. Residues 931–1040 (DAAKEGWLHF…WIKTIQESSN (110 aa)) enclose the PH domain. Positions 1086–1133 (LGAKSEPKTQSPHSPKEESERKLLSKDDTSPPKDKGTWRKGIPSIMRK) are disordered. Over residues 1099–1122 (SPKEESERKLLSKDDTSPPKDKGT) the composition is skewed to basic and acidic residues. The 193-residue stretch at 1147-1339 (VRLDDCPPAH…TLIQHHDWFF (193 aa)) folds into the Rho-GAP domain. Disordered regions lie at residues 1348–1401 (LTTV…GSGK), 1418–1575 (SRKR…KHSE), 1598–1642 (SLDS…SEFP), and 1655–1686 (RGKLQEVTKSSRRNSEGSELSCTEGSLTSSLD). The segment covering 1349-1362 (TTVQEESTVDSQPV) has biased composition (polar residues). Positions 1383–1401 (SDSATSDSTKSKGSWGSGK) are enriched in low complexity. Phosphoserine occurs at positions 1418, 1432, and 1433. 2 stretches are compositionally biased toward basic and acidic residues: residues 1441 to 1466 (FFKKENVEQCHNDTKEESKKESETLG) and 1477 to 1493 (NSTRKDPSTTKDEKISL). Residue Lys1444 forms a Glycyl lysine isopeptide (Lys-Gly) (interchain with G-Cter in SUMO) linkage. Ser1504 bears the Phosphoserine mark. Thr1516 carries the post-translational modification Phosphothreonine. Ser1527 is modified (phosphoserine). A compositionally biased stretch (low complexity) spans 1544–1559 (SDSGTLLSTSSQASLA). The segment at 1592 to 1861 (SATYLTSLDS…WLARERLRTS (270 aa)) is interaction with CTNNA1. Over residues 1603–1612 (RLSPEVQSVA) the composition is skewed to polar residues. The segment covering 1624-1634 (SELISEGRPVE) has biased composition (basic and acidic residues). A Phosphoserine modification is found at Ser1669. Residues 1671 to 1686 (GSELSCTEGSLTSSLD) are compositionally biased toward polar residues. Phosphothreonine is present on Thr1682. Ser1742 carries the post-translational modification Phosphoserine. Positions 1860–1958 (TSTSDLSRGE…GSKAEFHPCL (99 aa)) are disordered. The span at 1874–1909 (QTENPSTREIATTDTPLSLHCNTGSSSSTLASTNRP) shows a compositional bias: polar residues. A Phosphoserine modification is found at Ser1917. Positions 1918 to 1931 (PDQINGESFQNVSK) are enriched in polar residues.

As to quaternary structure, interacts with GTP-bound ARF1 and ARF6. Interacts with CTNNA1. In terms of processing, sumoylated with SUMO2 and SUMO3 in proliferating lymphocytes. Widely expressed with higher expression in brain, heart, skeletal muscle and placenta.

Its subcellular location is the golgi apparatus membrane. The protein resides in the cell junction. It localises to the cytoplasmic vesicle membrane. The protein localises to the cytoplasm. It is found in the cytoskeleton. Its function is as follows. Functions as a GTPase-activating protein (GAP) for RHOA and CDC42. Downstream partner of ARF1 which may control Golgi apparatus structure and function. Also required for CTNNA1 recruitment to adherens junctions. This is Rho GTPase-activating protein 21 (ARHGAP21) from Homo sapiens (Human).